We begin with the raw amino-acid sequence, 780 residues long: MEEKKTGAAAALALLNQKFPVADVIAGTKCERAIKWELTIGDDLKPKWTHSIVCVSIEKTPFAKGSCRTAHKLKDWSQPDQGLVGKFSTNKKTTRDSYFTDVLMQTFCAKWAEKFNEAKPPKPITFLPSYVYELIDHPPPYPVCGGEPFIEGDYKKHNNNSGYVSSDARNTPQSFSHFSYELSNHELLIVDIQGVNDFYTDPQIHTKSGEGFGEGNLGETGFHKFLQTHKCNPVCDFLKLKPINQSKKALLRGTLPVVQLMDFHDAIGLNGNGSGPKNNYDMNYFRNGGGAQQPISLDDEEKMLQEQLERIRAQQQQKSKPSPPLVKQPSGNNLHKQQSPSSPTSKPVPQIVKTPSQSNVVNKSPVSPPKENSNVKLEQDNINNNNSSISSNNDNSNNNNNNNDNINNSSNSSSVNSNSSSVSSSSSSSSSSSSSSTTNAAPISIQVSRNSPPPQQPIQPSSAAASASSTSSSNVPTPESTSTSSMEQTPDRSEFEKWDLTSIKNIDTVRGLQSECITGDSLRLYSGSNDGQIGVWDAVELKHVTNIKAHGKSIRAVIKRPGFDQNILTAGADSLVKEWDINTQQTIKEIKESNEVNTIFIQDNLLYTGCNDKTVKVWDMRSYECVKTLSGHTRAIKSVCAMGNLLFSGSNDQQIYVWNLATGTILTNFQGHEGWVKTLYAHNNMLYSGSHDETIRIWDLKTTRCVNTIKCKDRVETLHVTNQGIFAGSGDWLQVFSHDKYENLASLNTRSSILCLWRNQNQLFTGSLASNLKVWSWDKM.

The Alpha-type protein kinase domain occupies 40–243 (IGDDLKPKWT…VCDFLKLKPI (204 aa)). Residues 310 to 495 (RIRAQQQQKS…MEQTPDRSEF (186 aa)) are disordered. Residues 337–350 (QQSPSSPTSKPVPQ) show a composition bias toward low complexity. The span at 353 to 376 (KTPSQSNVVNKSPVSPPKENSNVK) shows a compositional bias: polar residues. A compositionally biased stretch (low complexity) spans 380 to 436 (DNINNNNSSISSNNDNSNNNNNNNDNINNSSNSSSVNSNSSSVSSSSSSSSSSSSSS). The span at 437 to 450 (TTNAAPISIQVSRN) shows a compositional bias: polar residues. Over residues 458 to 488 (IQPSSAAASASSTSSSNVPTPESTSTSSMEQ) the composition is skewed to low complexity. 6 WD repeats span residues 507–546 (DTVRGLQSECITGDSLRLYSGSNDGQIGVWDAVELKHVTN), 549–589 (AHGK…TIKE), 591–628 (KESNEVNTIFIQDNLLYTGCNDKTVKVWDMRSYECVKT), 631–668 (GHTRAIKSVCAMGNLLFSGSNDQQIYVWNLATGTILTN), 671–708 (GHEGWVKTLYAHNNMLYSGSHDETIRIWDLKTTRCVNT), and 748–780 (NTRSSILCLWRNQNQLFTGSLASNLKVWSWDKM).

The protein belongs to the protein kinase superfamily. Alpha-type protein kinase family. ALPK subfamily. Interacts with myosin II heavy chain (mhcA). Autophosphorylated in vitro.

Its subcellular location is the cytoplasm. It is found in the cell cortex. It localises to the membrane. The protein resides in the cleavage furrow. The catalysed reaction is L-threonyl-[myosin heavy-chain] + ATP = O-phospho-L-threonyl-[myosin heavy-chain] + ADP + H(+). Functionally, phosphorylates threonine at 'Thr-1823', 'Thr-1833' and 'Thr-2029' in the C-terminal tail region of myosin II heavy chain (mhcA). This phosphorylation is critical in actin-activated ATPase activity of the myosin and regulating the assembly and disassembly of myosin II filament. In vitro, catalytic domain phosphorylates mhcA, myelin basic protein, myosin regulatory light chain, casein and caldesmon. Drives the disassembly of myosin II filaments for efficient cytokinesis and recycling of myosin II that occurs during late cytokinesis. Can be activated in vitro by autophosphorylation. The protein is Myosin heavy chain kinase C (mhkC) of Dictyostelium discoideum (Social amoeba).